A 235-amino-acid chain; its full sequence is Glycerol-3-phosphate acyltransferase (235 aa).

6 helical membrane-spanning segments follow: residues 4–24 (LIVI…IIAG), 56–76 (AVTL…VVFF), 90–110 (VALR…TVFA), 126–146 (FGIA…TIFV), 152–172 (VASI…KYLF), and 191–211 (IHDS…FAII).

Belongs to the PlsY family. In terms of assembly, probably interacts with PlsX.

The protein resides in the cell inner membrane. The enzyme catalyses an acyl phosphate + sn-glycerol 3-phosphate = a 1-acyl-sn-glycero-3-phosphate + phosphate. Its pathway is lipid metabolism; phospholipid metabolism. Its function is as follows. Catalyzes the transfer of an acyl group from acyl-phosphate (acyl-PO(4)) to glycerol-3-phosphate (G3P) to form lysophosphatidic acid (LPA). This enzyme utilizes acyl-phosphate as fatty acyl donor, but not acyl-CoA or acyl-ACP. The protein is Glycerol-3-phosphate acyltransferase of Prosthecochloris aestuarii (strain DSM 271 / SK 413).